Here is a 284-residue protein sequence, read N- to C-terminus: MLSKQIPLGIYEKALPAGECWLERLQLAKTLGFDFVEMSVDETDERLSRLDWSREQRLALVNAIVETGVRVPSMCLSAHRRFPLGSEDDAVRAQGLEIMRKAIQFAQDVGIRVIQLAGYDVYYQEANNETRRRFRDGLKESVEMASRAQVTLAMEIMDYPLMNSISKALGYAHYLNNPWFQLYPDIGNLSAWDNDVQMELQAGIGHIVAVHVKDTKSGVFKNVPFGEGVVDFERCFETLKQSGYCGPYLIEMWSETAEDPAAEVAKARDWVKARMAKAGMVEAA.

The protein belongs to the L-ribulose-5-phosphate 3-epimerase family.

It catalyses the reaction L-ribulose 5-phosphate = L-xylulose 5-phosphate. It functions in the pathway cofactor degradation; L-ascorbate degradation; D-xylulose 5-phosphate from L-ascorbate: step 3/4. In terms of biological role, catalyzes the isomerization of L-xylulose-5-phosphate to L-ribulose-5-phosphate. Is involved in the anaerobic L-ascorbate utilization. The chain is L-ribulose-5-phosphate 3-epimerase UlaE from Escherichia coli (strain ATCC 8739 / DSM 1576 / NBRC 3972 / NCIMB 8545 / WDCM 00012 / Crooks).